The chain runs to 580 residues: tRNA-guanine(15) transglycosylase (580 aa).

Catalysis depends on D91, which acts as the Nucleophile. D126 and A192 together coordinate substrate. The Zn(2+) site is built by C275, C277, and C280. The 76-residue stretch at 504-579 (RMRVVVDEDA…LAVKVRRGVE (76 aa)) folds into the PUA domain.

This sequence belongs to the archaeosine tRNA-ribosyltransferase family. Zn(2+) serves as cofactor.

It carries out the reaction guanosine(15) in tRNA + 7-cyano-7-deazaguanine = 7-cyano-7-carbaguanosine(15) in tRNA + guanine. It functions in the pathway tRNA modification; archaeosine-tRNA biosynthesis. Functionally, exchanges the guanine residue with 7-cyano-7-deazaguanine (preQ0) at position 15 in the dihydrouridine loop (D-loop) of archaeal tRNAs. This Thermococcus onnurineus (strain NA1) protein is tRNA-guanine(15) transglycosylase.